We begin with the raw amino-acid sequence, 261 residues long: uncharacterized protein (261 aa).

Helical transmembrane passes span 15–35 (WYSVGLIFFSFIPIYYSIIVC), 87–107 (VYLIVLYIILIIHFGFEIRNA), and 131–151 (LLLYFQNLLLLPYICGGYFLI). The segment covering 234-246 (LEEKKAKRRQNAE) has biased composition (basic and acidic residues). Positions 234 to 261 (LEEKKAKRRQNAERRKKRREIAMEQREQ) are disordered.

It is found in the membrane. This is an uncharacterized protein from Caenorhabditis elegans.